The sequence spans 66 residues: Large ribosomal subunit protein bL35 (66 aa).

A compositionally biased stretch (basic residues) spans 1–16 (MPKQKTHRASAKRFKR). The segment at 1–21 (MPKQKTHRASAKRFKRTGSGG) is disordered.

The protein belongs to the bacterial ribosomal protein bL35 family.

The protein is Large ribosomal subunit protein bL35 of Streptococcus gordonii (strain Challis / ATCC 35105 / BCRC 15272 / CH1 / DL1 / V288).